Reading from the N-terminus, the 330-residue chain is Beta-ketoacyl-[acyl-carrier-protein] synthase III (330 aa).

Residues cysteine 114 and histidine 257 contribute to the active site. The tract at residues 258–262 (QANLR) is ACP-binding. Asparagine 287 is an active-site residue.

Belongs to the thiolase-like superfamily. FabH family. In terms of assembly, homodimer.

It is found in the cytoplasm. The catalysed reaction is malonyl-[ACP] + acetyl-CoA + H(+) = 3-oxobutanoyl-[ACP] + CO2 + CoA. The protein operates within lipid metabolism; fatty acid biosynthesis. Catalyzes the condensation reaction of fatty acid synthesis by the addition to an acyl acceptor of two carbons from malonyl-ACP. Catalyzes the first condensation reaction which initiates fatty acid synthesis and may therefore play a role in governing the total rate of fatty acid production. Possesses both acetoacetyl-ACP synthase and acetyl transacylase activities. Its substrate specificity determines the biosynthesis of branched-chain and/or straight-chain of fatty acids. The polypeptide is Beta-ketoacyl-[acyl-carrier-protein] synthase III (Oleidesulfovibrio alaskensis (strain ATCC BAA-1058 / DSM 17464 / G20) (Desulfovibrio alaskensis)).